Consider the following 249-residue polypeptide: MKYLVDTHTHTIASTHAYSTLQEYIAMAKHKGIKLFATTDHGPDMADAPHFWHFVNLRVLPRIVDGVGILRGIEANIKNVVGEIDFFGDYLQELDIVLAGFHEPVFAPSNKETHTAALINCIMSGHVDIITHPGNPAYPIDIAAVAKAAAENNVALEINNSSFLTSRKGSEHNCLAIAKAVKEAGGLLVMGSDSHVAYSLGDFTQAEQIIEQADFPIERLLNRSPEALLAFLSARGHGSLDEYSALLEN.

Histidine 8, histidine 10, histidine 16, histidine 41, glutamate 74, histidine 102, histidine 132, aspartate 193, and histidine 195 together coordinate Zn(2+).

It belongs to the PHP family. Requires Zn(2+) as cofactor.

The polypeptide is Probable phosphatase Spea_1436 (Shewanella pealeana (strain ATCC 700345 / ANG-SQ1)).